Here is a 384-residue protein sequence, read N- to C-terminus: BTB and MATH domain-containing protein 34 (384 aa).

Residues 41–127 are a coiled coil; that stretch reads LNGNTTLKRI…ELKFQKEQLK (87 aa). One can recognise an MATH domain in the interval 167–277; sequence EFSHTFNSVA…VFNFGEYEEI (111 aa). The 64-residue stretch at 317–380 folds into the BTB domain; the sequence is SDAVMIVKDE…LYGEPALTGR (64 aa).

The sequence is that of BTB and MATH domain-containing protein 34 (bath-34) from Caenorhabditis elegans.